Consider the following 60-residue polypeptide: Large ribosomal subunit protein bL32 (60 aa).

This sequence belongs to the bacterial ribosomal protein bL32 family.

The polypeptide is Large ribosomal subunit protein bL32 (Thermosipho melanesiensis (strain DSM 12029 / CIP 104789 / BI429)).